Reading from the N-terminus, the 190-residue chain is Threonylcarbamoyl-AMP synthase (190 aa).

Residues Arg7 to Gly190 form the YrdC-like domain.

The protein belongs to the SUA5 family. TsaC subfamily.

It is found in the cytoplasm. It carries out the reaction L-threonine + hydrogencarbonate + ATP = L-threonylcarbamoyladenylate + diphosphate + H2O. In terms of biological role, required for the formation of a threonylcarbamoyl group on adenosine at position 37 (t(6)A37) in tRNAs that read codons beginning with adenine. Catalyzes the conversion of L-threonine, HCO(3)(-)/CO(2) and ATP to give threonylcarbamoyl-AMP (TC-AMP) as the acyladenylate intermediate, with the release of diphosphate. In Escherichia coli O9:H4 (strain HS), this protein is Threonylcarbamoyl-AMP synthase.